Consider the following 294-residue polypeptide: MSINYLKFPEIDPVMFSIGPVSLHWYGMMYLIGFVFALWLANRRAAKPNSGWQKSEVETLLYVGFVGVFIGGRLGYVLFYNLPVFLDNPLYLFKVWDGGMSFHGGLIGVICAMIWFARRTKRHFFQVADFVAPLIPFGLGLGRIGNFINGELWGRVTLDTPWAILFPGSRAEDLQLVAQDPTTLLPIIQQYGVLPRHPSQLYEMFLEGVVLFIILNIFVRKNRPMGSVSGLFLIGYGAFRIIVEFFRQPDAQLGLFSGISMGQILSIPMIILGIIFMVWAYRRDKATPQTPTTH.

The next 7 helical transmembrane spans lie at 21–41 (VSLH…LWLA), 60–80 (LLYV…VLFY), 96–116 (WDGG…MIWF), 124–144 (FFQV…LGRI), 199–219 (SQLY…NIFV), 226–246 (GSVS…VEFF), and 259–279 (ISMG…FMVW). Residue arginine 143 coordinates a 1,2-diacyl-sn-glycero-3-phospho-(1'-sn-glycerol).

The protein belongs to the Lgt family.

It is found in the cell inner membrane. It carries out the reaction L-cysteinyl-[prolipoprotein] + a 1,2-diacyl-sn-glycero-3-phospho-(1'-sn-glycerol) = an S-1,2-diacyl-sn-glyceryl-L-cysteinyl-[prolipoprotein] + sn-glycerol 1-phosphate + H(+). The protein operates within protein modification; lipoprotein biosynthesis (diacylglyceryl transfer). Catalyzes the transfer of the diacylglyceryl group from phosphatidylglycerol to the sulfhydryl group of the N-terminal cysteine of a prolipoprotein, the first step in the formation of mature lipoproteins. This is Phosphatidylglycerol--prolipoprotein diacylglyceryl transferase from Proteus mirabilis (strain HI4320).